The chain runs to 366 residues: Isopentenyl-diphosphate delta-isomerase (366 aa).

Substrate is bound at residue 6–7 (RK). FMN is bound by residues Thr63, 64–66 (GMT), Ser94, and Asn123. Residue 94–96 (SQR) coordinates substrate. Gln158 contacts substrate. Glu159 lines the Mg(2+) pocket. FMN is bound by residues Lys191, Ser216, Thr221, 273-275 (GIR), and 294-295 (AN).

This sequence belongs to the IPP isomerase type 2 family. As to quaternary structure, homooctamer. Dimer of tetramers. The cofactor is FMN. It depends on NADPH as a cofactor. Requires Mg(2+) as cofactor.

Its subcellular location is the cytoplasm. It catalyses the reaction isopentenyl diphosphate = dimethylallyl diphosphate. Involved in the biosynthesis of isoprenoids. Catalyzes the 1,3-allylic rearrangement of the homoallylic substrate isopentenyl (IPP) to its allylic isomer, dimethylallyl diphosphate (DMAPP). This is Isopentenyl-diphosphate delta-isomerase from Metallosphaera sedula (strain ATCC 51363 / DSM 5348 / JCM 9185 / NBRC 15509 / TH2).